A 224-amino-acid polypeptide reads, in one-letter code: MSEMLVLDGLTKAYNRGRPGEVTVLRGATLSVGTGEVVALVAPSGAGKSTLLHIAGLLDTPDEGRVAIGGTEMAGLGDRARTGTRRREVGFIYQFHHLLPEFTALENVVLPQLANGVSRRGAEARARDLLGRVGVGAREGHRPAALSGGEQQRVAFCRALANAPRLLLADEPTGNLDPGTSDQVFGVLMDLVRGTGLSALIATHNLELAARMDRVVRLEAGRVV.

Positions 5–224 constitute an ABC transporter domain; the sequence is LVLDGLTKAY…VVRLEAGRVV (220 aa). 42–49 provides a ligand contact to ATP; sequence APSGAGKS.

The protein belongs to the ABC transporter superfamily. Lipoprotein translocase (TC 3.A.1.125) family. The complex is composed of two ATP-binding proteins (LolD) and two transmembrane proteins (LolC and LolE).

Its subcellular location is the cell inner membrane. Functionally, part of the ABC transporter complex LolCDE involved in the translocation of mature outer membrane-directed lipoproteins, from the inner membrane to the periplasmic chaperone, LolA. Responsible for the formation of the LolA-lipoprotein complex in an ATP-dependent manner. This is Lipoprotein-releasing system ATP-binding protein LolD from Cereibacter sphaeroides (strain ATCC 17023 / DSM 158 / JCM 6121 / CCUG 31486 / LMG 2827 / NBRC 12203 / NCIMB 8253 / ATH 2.4.1.) (Rhodobacter sphaeroides).